Here is a 69-residue protein sequence, read N- to C-terminus: Large ribosomal subunit protein bL31 (69 aa).

Positions 16, 18, 36, and 39 each coordinate Zn(2+).

This sequence belongs to the bacterial ribosomal protein bL31 family. Type A subfamily. As to quaternary structure, part of the 50S ribosomal subunit. It depends on Zn(2+) as a cofactor.

In terms of biological role, binds the 23S rRNA. This Thermosipho africanus (strain TCF52B) protein is Large ribosomal subunit protein bL31.